The primary structure comprises 75 residues: MASSCELCCEIFIAILLPPVGVCLRHGCCTVEFFICLILTCLGYLPGIIYAIYAICFLHRDEYFDEYRRPIYYVA.

A run of 2 helical transmembrane segments spans residues 4–24 and 33–53; these read SCEL…GVCL and FFIC…YAIY.

This sequence belongs to the UPF0057 (PMP3) family.

It localises to the membrane. This is UPF0057 membrane protein At2g24040 from Arabidopsis thaliana (Mouse-ear cress).